The primary structure comprises 243 residues: Venom protease (243 aa).

Positions 1–243 (VVGGKPAKLG…DSFILPALKK (243 aa)) constitute a Peptidase S1 domain. Cys34 and Cys50 are disulfide-bonded. Catalysis depends on charge relay system residues His49 and Asp97. 2 disulfide bridges follow: Cys165-Cys178 and Cys189-Cys217. Catalysis depends on Ser193, which acts as the Charge relay system.

Belongs to the peptidase S1 family. Expressed by the venom duct.

Its subcellular location is the secreted. The sequence is that of Venom protease from Bombus pensylvanicus (American bumblebee).